We begin with the raw amino-acid sequence, 156 residues long: Small ribosomal subunit protein uS7 (156 aa).

The protein belongs to the universal ribosomal protein uS7 family. Part of the 30S ribosomal subunit. Contacts proteins S9 and S11.

One of the primary rRNA binding proteins, it binds directly to 16S rRNA where it nucleates assembly of the head domain of the 30S subunit. Is located at the subunit interface close to the decoding center, probably blocks exit of the E-site tRNA. This Oceanobacillus iheyensis (strain DSM 14371 / CIP 107618 / JCM 11309 / KCTC 3954 / HTE831) protein is Small ribosomal subunit protein uS7.